A 297-amino-acid chain; its full sequence is Large ribosomal subunit protein uL15m (297 aa).

A mitochondrion-targeting transit peptide spans 1 to 22; sequence MAGPVRGAAGPWALDLLRALPR. Residues 27–68 are disordered; the sequence is NLRPNPGSRKPERRRRGQRRGRKCGRGHKGERQRGTRPRLGF. A compositionally biased stretch (basic residues) spans 37–53; the sequence is PERRRRGQRRGRKCGRG.

The protein belongs to the universal ribosomal protein uL15 family. In terms of assembly, component of the mitochondrial ribosome large subunit (39S) which comprises a 16S rRNA and about 50 distinct proteins.

The protein localises to the mitochondrion. The sequence is that of Large ribosomal subunit protein uL15m (MRPL15) from Bos taurus (Bovine).